Reading from the N-terminus, the 311-residue chain is tRNA dimethylallyltransferase (311 aa).

Residue 12-19 (GPTASGKT) participates in ATP binding. Residue 14 to 19 (TASGKT) coordinates substrate. 2 interaction with substrate tRNA regions span residues 37 to 40 (DSAM) and 161 to 165 (QRIQR).

This sequence belongs to the IPP transferase family. In terms of assembly, monomer. Mg(2+) serves as cofactor.

It carries out the reaction adenosine(37) in tRNA + dimethylallyl diphosphate = N(6)-dimethylallyladenosine(37) in tRNA + diphosphate. Its function is as follows. Catalyzes the transfer of a dimethylallyl group onto the adenine at position 37 in tRNAs that read codons beginning with uridine, leading to the formation of N6-(dimethylallyl)adenosine (i(6)A). The polypeptide is tRNA dimethylallyltransferase (Coxiella burnetii (strain RSA 331 / Henzerling II)).